A 964-amino-acid polypeptide reads, in one-letter code: SKI family transcriptional corepressor 1 (964 aa).

Disordered regions lie at residues Thr-45–Leu-72, Arg-278–Ala-365, Ala-414–Gly-452, Ala-525–Ser-587, Arg-610–Ala-766, and Tyr-793–Leu-842. The segment covering Gln-283–Cys-310 has biased composition (gly residues). Residues Ala-345–Pro-355 show a composition bias toward low complexity. Gly residues-rich tracts occupy residues Ala-356–Ala-365 and Pro-417–Ala-440. The span at Ser-571–Ala-583 shows a compositional bias: pro residues. A compositionally biased stretch (acidic residues) spans Asp-652–Val-661. Over residues Glu-798 to His-808 the composition is skewed to basic and acidic residues. The segment covering Asp-823–Asn-834 has biased composition (polar residues). Residues Glu-857–Glu-921 are a coiled coil.

This sequence belongs to the SKI family. As to quaternary structure, interacts with LBX1. Interacts with SMAD1, SMAD2 and SMAD3.

Its subcellular location is the nucleus. In terms of biological role, inhibits BMP signaling. Acts as a transcriptional corepressor of LBX1. The chain is SKI family transcriptional corepressor 1 (Skor1) from Rattus norvegicus (Rat).